The following is an 87-amino-acid chain: MAHHKSAIKRIKQNEKRNARNRHQKSTLKTYIKRVREAVESKDKEAAVAALQVAIPVIDKTATKGVIHKANASRSVSRLTKLVNTLG.

Residues 1-11 (MAHHKSAIKRI) show a composition bias toward basic residues. A disordered region spans residues 1–26 (MAHHKSAIKRIKQNEKRNARNRHQKS).

Belongs to the bacterial ribosomal protein bS20 family.

Binds directly to 16S ribosomal RNA. The sequence is that of Small ribosomal subunit protein bS20 from Trichlorobacter lovleyi (strain ATCC BAA-1151 / DSM 17278 / SZ) (Geobacter lovleyi).